The sequence spans 631 residues: Eukaryotic translation initiation factor 2-alpha kinase 1 (631 aa).

Residues 1–34 are disordered; it reads MQGGNSGVRKREEEGGGEGAVAAPPAIDFPAESS. An SIFI-degron motif is present at residues 85–104; that stretch reads LRSRQVFKLLCQTFIKMGLL. Residues 167–583 enclose the Protein kinase domain; sequence FEEVAILGKG…AVQLLQSELF (417 aa). Residues 173–181 and K196 each bind ATP; that span reads LGKGGYGRV. Residues 260–301 are disordered; that stretch reads QEEDREQYDVKNDESSSSSIVFAEPTPEKGKRFGESDTENQN. T285 is subject to Phosphothreonine. Positions 285–301 are enriched in basic and acidic residues; the sequence is TPEKGKRFGESDTENQN. An HRM 1 repeat occupies 410–415; it reads ACPYVM. The active-site Proton acceptor is D442. Phosphothreonine; by autocatalysis occurs at positions 486 and 488. T493 is modified (phosphothreonine). Residues 552 to 557 form an HRM 2 repeat; sequence RCPVQA.

Belongs to the protein kinase superfamily. Ser/Thr protein kinase family. GCN2 subfamily. In terms of assembly, synthesized in an inactive form that binds to the N-terminal domain of CDC37. Has to be associated with a multiprotein complex containing Hsp90, CDC37 and PPP5C for maturation and activation by autophosphorylation. The phosphatase PPP5C modulates this activation. Homodimer; homodimerizes in presence of heme, forming a disulfide-linked inactive homodimer. Interacts with DELE1; binds both to full-length DELE1 and processed form of DELE1 (S-DELE1) in response to stress, leading to activate its protein kinase activity and trigger the integrated stress response (ISR). Post-translationally, activated by autophosphorylation; phosphorylated predominantly on serine and threonine residues, but also on tyrosine residues. Autophosphorylation at Thr-488 is required for kinase activation. The active autophosphorylated form apparently is largely refractory to cellular heme fluctuations. In terms of processing, ubiquitinated and degraded by the SIFI complex once the mitochondrial stress has been resolved, thereby providing stress response silencing. Within the SIFI complex, UBR4 initiates ubiquitin chain that are further elongated or branched by KCMF1.

The protein resides in the cytoplasm. It catalyses the reaction L-seryl-[protein] + ATP = O-phospho-L-seryl-[protein] + ADP + H(+). It carries out the reaction L-threonyl-[protein] + ATP = O-phospho-L-threonyl-[protein] + ADP + H(+). With respect to regulation, in normal conditions, the protein kinase activity is inhibited; inhibition is relieved by various stress conditions. Inhibited by heme: in presence of heme, forms a disulfide-linked inactive homodimer. Heme depletion relieves inhibition and stimulates kinase activity by autophosphorylation. Inhibited by the heme metabolites biliverdin and bilirubin. Induced by oxidative stress generated by arsenite treatment. Binding of nitric oxide (NO) to the heme iron in the N-terminal heme-binding domain activates the kinase activity, while binding of carbon monoxide (CO) suppresses kinase activity. Protein kinase activity is also activated upon binding to DELE1 in response to various stress, triggering the integrated stress response (ISR): activated by full-length DELE1 in response to iron deficiency, while it is activated by the processed form of DELE1 (S-DELE1) in response to mitochondrial stress. Its function is as follows. Metabolic-stress sensing protein kinase that phosphorylates the alpha subunit of eukaryotic translation initiation factor 2 (EIF2S1/eIF-2-alpha) in response to various stress conditions. Key activator of the integrated stress response (ISR) required for adaptation to various stress, such as heme deficiency, oxidative stress, osmotic shock, mitochondrial dysfunction and heat shock. EIF2S1/eIF-2-alpha phosphorylation in response to stress converts EIF2S1/eIF-2-alpha in a global protein synthesis inhibitor, leading to a global attenuation of cap-dependent translation, while concomitantly initiating the preferential translation of ISR-specific mRNAs, such as the transcriptional activator ATF4, and hence allowing ATF4-mediated reprogramming. Acts as a key sensor of heme-deficiency: in normal conditions, binds hemin via a cysteine thiolate and histidine nitrogenous coordination, leading to inhibit the protein kinase activity. This binding occurs with moderate affinity, allowing it to sense the heme concentration within the cell: heme depletion relieves inhibition and stimulates kinase activity, activating the ISR. Thanks to this unique heme-sensing capacity, plays a crucial role to shut off protein synthesis during acute heme-deficient conditions. In red blood cells (RBCs), controls hemoglobin synthesis ensuring a coordinated regulation of the synthesis of its heme and globin moieties. It thereby plays an essential protective role for RBC survival in anemias of iron deficiency. Iron deficiency also triggers activation by full-length DELE1. Also activates the ISR in response to mitochondrial dysfunction: HRI/EIF2AK1 protein kinase activity is activated upon binding to the processed form of DELE1 (S-DELE1), thereby promoting the ATF4-mediated reprogramming. Also acts as an activator of mitophagy in response to mitochondrial damage: catalyzes phosphorylation of eIF-2-alpha (EIF2S1) following activation by S-DELE1, thereby promoting mitochondrial localization of EIF2S1, triggering PRKN-independent mitophagy. This is Eukaryotic translation initiation factor 2-alpha kinase 1 from Macaca fascicularis (Crab-eating macaque).